The following is a 473-amino-acid chain: Major myo-inositol transporter IolT (473 aa).

The next 12 membrane-spanning stretches (helical) occupy residues 14–34 (IILVSTFGGLLFGYDTGVLNG), 49–69 (AFTEGLVTSSLLFGAALGAVF), 83–103 (ILFLAVIFFISTIGCTFAPNV), 111–131 (FVLGIAVGGASVTVPAYLAEM), 146–166 (LMIVSGQLLAFVFNAILGTTM), 172–192 (VWRFMLVIASLPALFLFFGMI), 256–276 (IVFIGLGIAIVQQITGVNSIM), 295–315 (IGNIANGVISVLATFVGIWLL), 325–345 (MTGLIGTTTALLLIGIFSLVL), 350–370 (ALPYVVLSLTVTFLAFQQGAI), 389–409 (LGMGVTVFCLWMVNFAVSFTF), and 411–431 (ILLAAIGLSTTFFIFVGLGIC).

This sequence belongs to the major facilitator superfamily. Sugar transporter (TC 2.A.1.1) family.

Its subcellular location is the cell membrane. It functions in the pathway polyol metabolism; myo-inositol degradation into acetyl-CoA. Functionally, major myo-inositol uptake transporter. In Bacillus subtilis (strain 168), this protein is Major myo-inositol transporter IolT (iolT).